The sequence spans 692 residues: DNA topoisomerase 4 subunit B (692 aa).

Residues tyrosine 53, asparagine 93, aspartate 120, 162-168 (GLHGVGI), and lysine 393 each bind ATP. Residues 473-587 (AELFIVEGDS…AGHLYLAVPP (115 aa)) enclose the Toprim domain. 3 residues coordinate Mg(2+): glutamate 479, aspartate 552, and aspartate 554.

The protein belongs to the type II topoisomerase family. ParE type 1 subfamily. As to quaternary structure, heterotetramer composed of ParC and ParE. Requires Mg(2+) as cofactor. Mn(2+) serves as cofactor. The cofactor is Ca(2+).

The catalysed reaction is ATP-dependent breakage, passage and rejoining of double-stranded DNA.. In terms of biological role, topoisomerase IV is essential for chromosome segregation. It relaxes supercoiled DNA. Performs the decatenation events required during the replication of a circular DNA molecule. The polypeptide is DNA topoisomerase 4 subunit B (Bartonella bacilliformis (strain ATCC 35685 / KC583 / Herrer 020/F12,63)).